Consider the following 926-residue polypeptide: Beta-mannosidase A (926 aa).

The signal sequence occupies residues 1–21 (MHVKAETVLALLTPAPPSVVG). N-linked (GlcNAc...) asparagine glycosylation is found at asparagine 40, asparagine 242, asparagine 277, asparagine 311, and asparagine 342. The active-site Proton donor is the glutamate 474. N-linked (GlcNAc...) asparagine glycans are attached at residues asparagine 532, asparagine 603, asparagine 626, asparagine 653, asparagine 733, asparagine 756, asparagine 785, asparagine 793, asparagine 819, and asparagine 905.

The protein belongs to the glycosyl hydrolase 2 family. Beta-mannosidase A subfamily. In terms of assembly, homodimer.

Its subcellular location is the secreted. The enzyme catalyses Hydrolysis of terminal, non-reducing beta-D-mannose residues in beta-D-mannosides.. It participates in glycan metabolism; N-glycan degradation. In terms of biological role, exoglycosidase that cleaves the single beta-linked mannose residue from the non-reducing end of beta-mannosidic oligosaccharides of various complexity and length. Involved in the degradation of polymeric mannan and galactomannan. The chain is Beta-mannosidase A (mndA) from Aspergillus fumigatus (strain ATCC MYA-4609 / CBS 101355 / FGSC A1100 / Af293) (Neosartorya fumigata).